A 121-amino-acid chain; its full sequence is Large ribosomal subunit protein bL19 (121 aa).

Belongs to the bacterial ribosomal protein bL19 family.

This protein is located at the 30S-50S ribosomal subunit interface and may play a role in the structure and function of the aminoacyl-tRNA binding site. In Neisseria gonorrhoeae (strain ATCC 700825 / FA 1090), this protein is Large ribosomal subunit protein bL19.